We begin with the raw amino-acid sequence, 435 residues long: Arginine biosynthesis bifunctional protein ArgJ, mitochondrial (435 aa).

Residues Thr-167, Lys-193, Thr-204, Glu-291, Asn-430, and Thr-435 each contribute to the substrate site. Thr-204 serves as the catalytic Nucleophile.

It belongs to the ArgJ family. In terms of assembly, heterodimer of an alpha and a beta chain. Post-translationally, the alpha and beta chains are autoproteolytically processed from a single precursor protein within the mitochondrion.

It localises to the mitochondrion matrix. It catalyses the reaction N(2)-acetyl-L-ornithine + L-glutamate = N-acetyl-L-glutamate + L-ornithine. It carries out the reaction L-glutamate + acetyl-CoA = N-acetyl-L-glutamate + CoA + H(+). The protein operates within amino-acid biosynthesis; L-arginine biosynthesis; L-ornithine and N-acetyl-L-glutamate from L-glutamate and N(2)-acetyl-L-ornithine (cyclic): step 1/1. It functions in the pathway amino-acid biosynthesis; L-arginine biosynthesis; N(2)-acetyl-L-ornithine from L-glutamate: step 1/4. In terms of biological role, catalyzes two activities which are involved in the cyclic version of arginine biosynthesis: the synthesis of acetylglutamate from glutamate and acetyl-CoA, and of ornithine by transacetylation between acetylornithine and glutamate. This is Arginine biosynthesis bifunctional protein ArgJ, mitochondrial from Heterostelium pallidum (strain ATCC 26659 / Pp 5 / PN500) (Cellular slime mold).